Here is a 419-residue protein sequence, read N- to C-terminus: MSIGVQSSGINISHAELSRLVDAGKSEQGDKAVRDDGRALARADAALAAVVGERVAARRDAVAGSGAQRVELARPKPDAQTRATDRRTVSGLEREHKRLAASQTPRVTGMHDALVQRHVSLDGAKAAHGEGVKRAAGDAPRAAADAPQRFAFADDKAFDAMLALGAAMQKNVQSDLAMQGKLTMLAHDAMMSAAAQDRSIGAAQMTAAIAGGALQATTSLGGAMQQMKSLSTKSMSIEKELKPQAELKQFHAEQALELRGINKPVLSNDEVSHVKIKRDTGETVRHEIDHGGERMSDEHASVLAQEAPARQHRIDMHGMRHEENLVKAGRQQMKGDLLQSGGQIGKNQIDGASAQQQGADRAEQKEDENAQQTAMAAASTRDEAAHRSREAAQKAIDAAKSQVANDNAVAAQVAGNLRT.

Disordered stretches follow at residues 62-91 (VAGS…TVSG) and 338-402 (LQSG…AKSQ). Basic and acidic residues-rich tracts occupy residues 71–91 (ELAR…TVSG) and 380–392 (TRDE…REAA).

Belongs to the SctB/SipC family.

The protein resides in the secreted. The chain is Effector protein BipC (bipC) from Burkholderia mallei (strain NCTC 10247).